A 183-amino-acid chain; its full sequence is Protein Syd (183 aa).

It belongs to the Syd family.

The protein resides in the cell inner membrane. Its function is as follows. Interacts with the SecY protein in vivo. May bind preferentially to an uncomplexed state of SecY, thus functioning either as a chelating agent for excess SecY in the cell or as a regulatory factor that negatively controls the translocase function. This chain is Protein Syd, found in Idiomarina loihiensis (strain ATCC BAA-735 / DSM 15497 / L2-TR).